We begin with the raw amino-acid sequence, 286 residues long: Bifunctional protein FolD (286 aa).

NADP(+) is bound by residues 168–170 (GRG), threonine 195, and valine 236.

This sequence belongs to the tetrahydrofolate dehydrogenase/cyclohydrolase family. Homodimer.

It catalyses the reaction (6R)-5,10-methylene-5,6,7,8-tetrahydrofolate + NADP(+) = (6R)-5,10-methenyltetrahydrofolate + NADPH. The enzyme catalyses (6R)-5,10-methenyltetrahydrofolate + H2O = (6R)-10-formyltetrahydrofolate + H(+). The protein operates within one-carbon metabolism; tetrahydrofolate interconversion. Catalyzes the oxidation of 5,10-methylenetetrahydrofolate to 5,10-methenyltetrahydrofolate and then the hydrolysis of 5,10-methenyltetrahydrofolate to 10-formyltetrahydrofolate. In Mycolicibacterium fortuitum (Mycobacterium fortuitum), this protein is Bifunctional protein FolD.